Reading from the N-terminus, the 381-residue chain is MAAGSASSLGGGSWPGSEAGDFLARYRQVSNKLKKRFLRKPNVAEAGEQFAQLARELRAQECLPYAAWCQLAVARCQQALFHGPGEALALTEAARLFLRQECDARQRLGCPAAYGEPLQAAASALGAAVRLHLELGQPAAAAALCLELAAALRAVGQPAAAAGHFQRAAQLHLPLMPLAALQALGDAASCQLLARDYTGALAVFTRMQRLAREHGGHPVQQPELPQQLPSVPQPSLPGPQPRPVLGSTLPLPLPPDHAPGSVAQSPGTLGAFADVLVRCEVSRVLLLLLLQPPPAKLLPEHAQTLEKYSWEAFDGHGQDSSGQLPEELFLLLQSLVMAAHEKDTEGIKKLQVEMWPLLTAEQNHLLHLVLQETISPSGQGV.

Alanine 2 is subject to N-acetylalanine. The short motif at 34–36 (KKR) is the Nuclear localization signal element. The segment at 213 to 260 (EHGGHPVQQPELPQQLPSVPQPSLPGPQPRPVLGSTLPLPLPPDHAPG) is disordered. Positions 218–230 (PVQQPELPQQLPS) are enriched in low complexity. The segment covering 231–242 (VPQPSLPGPQPR) has biased composition (pro residues).

In terms of assembly, interacts with HTT (via C-terminus). Interacts with RAB5A. Found in a complex with F8A1/F8A2/F8A3, HTT and RAB5A; mediates the recruitment of HTT by RAB5A onto early endosomes.

The protein resides in the cytoplasm. It is found in the nucleus. It localises to the early endosome. Its subcellular location is the nuclear body. Its function is as follows. RAB5A effector molecule that is involved in vesicular trafficking of early endosomes. Mediates the recruitment of HTT by RAB5A onto early endosomes. The HTT-F8A1/F8A2/F8A3-RAB5A complex stimulates early endosomal interaction with actin filaments and inhibits interaction with microtubules, leading to the reduction of endosome motility. This Rattus norvegicus (Rat) protein is 40-kDa huntingtin-associated protein (F8a1).